We begin with the raw amino-acid sequence, 436 residues long: Tol-Pal system protein TolB (436 aa).

The N-terminal stretch at 1 to 28 (MEMLRRNFFRLLMVLVAGCGLIASPANA) is a signal peptide.

It belongs to the TolB family. As to quaternary structure, the Tol-Pal system is composed of five core proteins: the inner membrane proteins TolA, TolQ and TolR, the periplasmic protein TolB and the outer membrane protein Pal. They form a network linking the inner and outer membranes and the peptidoglycan layer.

Its subcellular location is the periplasm. Its function is as follows. Part of the Tol-Pal system, which plays a role in outer membrane invagination during cell division and is important for maintaining outer membrane integrity. This Rhizobium meliloti (strain 1021) (Ensifer meliloti) protein is Tol-Pal system protein TolB.